Consider the following 213-residue polypeptide: Motile sperm domain-containing protein 1 (213 aa).

An MSP domain is found at 16-143 (PVFVFPTELI…KEHLTESVFF (128 aa)). Transmembrane regions (helical) follow at residues 159–179 (SLLT…PTLG) and 191–211 (LSVN…MAIL). The Nuclear export signal signature appears at 205–208 (LITM).

Widely expressed. Shows highest expression in ribs, and slightly lower levels of expression in heart, kidney, muscle, thymus, calvariae and lung. Also detected at low levels in spleen and liver.

Its subcellular location is the endoplasmic reticulum membrane. It is found in the golgi apparatus membrane. In terms of biological role, plays a role in differentiation and/or proliferation of mesenchymal stem cells. Proposed to be involved in epithelial-to-mesenchymal transition (EMT). However, another study suggests that it is not required for EMT or stem cell self-renewal and acts during later stages of differentiation. This is Motile sperm domain-containing protein 1 (Mospd1) from Mus musculus (Mouse).